The following is a 397-amino-acid chain: Mannonate dehydratase (397 aa).

Belongs to the mannonate dehydratase family. Fe(2+) is required as a cofactor. Requires Mn(2+) as cofactor.

It carries out the reaction D-mannonate = 2-dehydro-3-deoxy-D-gluconate + H2O. The protein operates within carbohydrate metabolism; pentose and glucuronate interconversion. In terms of biological role, catalyzes the dehydration of D-mannonate. This is Mannonate dehydratase from Yersinia pseudotuberculosis serotype O:1b (strain IP 31758).